A 2422-amino-acid chain; its full sequence is Interferon-induced very large GTPase 1 (2422 aa).

The tract at residues 945–965 (ENFFEDSDSPTKSSSTEPSPH) is disordered. Residues 954–963 (PTKSSSTEPS) are compositionally biased toward low complexity. The VLIG-type G domain maps to 1479-1720 (DKRLFVLSIL…KISDVKSRVQ (242 aa)). Residues 1489–1496 (GLQSSGKS), 1542–1545 (DTEG), and 1619–1622 (TATD) each bind GTP.

This sequence belongs to the TRAFAC class dynamin-like GTPase superfamily. Very large inducible GTPase (VLIG) family.

The protein resides in the cytoplasm. It is found in the cytosol. Its subcellular location is the nucleus. This chain is Interferon-induced very large GTPase 1 (GVINP1), found in Homo sapiens (Human).